A 740-amino-acid polypeptide reads, in one-letter code: MPTPVESHSLLHSGLTLCGSIISVNQDRRKTSTLGCVIQVGSGFYGLTAAHAVRKSRAYPTLPLNSHTDEGLGAASDGPMTSHVLRNWQNPFMACKNAEAVELDDHSTSEVAVDESVEDVDFVTDVEYEDLREDDDNHGDDSTTSMPNDVFHEDYLTSAPQEGMMETQAMFLSIPELNDKCLVSRRARPNMAHRVTHGDSGSIVIDARTNVVYGHVVASNPLGEIYISPIGATLEQIQSHFPGSKVSLPDPLTILTGLATFGHETIGRKRARYPDKLRNLGLSPDTEYTRLVTPTANKSLDFSNYPKFHYFHQCSEDSSSNRRVNEVEKSQPANLTLDCNTVELGLRQSTWHQADSPVPLSSVKEESGLGKLARSPAEPAPSRPLPGSSIPVVISQSTGRELYSNGVTEATLSSKLSDEAEADTSIKPDSDAASPTDCRIIGHLRTRPVGLERDLSSTYNAALSMDQDPEELLQQDIFPMRVWRSLSTLKQRLPSQERLENLTWRMTHINLRKPKEQEEPKRHRTSNNSIVGSSDIADVGKTSKQKAIQPNIVELDVVTSPENIPLPASLVPISSSEATWQVDKKSVSSVTFGQSSGCFPPSYQGFRPDAPEKGNLPRATTTSYHLPPQPIGWPTCIPSNMKWHSLVNMSTLAADEHEGEGRADTNRHVSTQSNMPTEQSLLPQGDESVPPTCTNCFTLTCDILARNENVDQLAIDAPGHITSAKAVYNLYTFISYLLIF.

Disordered stretches follow at residues 353-391 (QADS…SSIP), 414-434 (SKLS…DAAS), 514-535 (PKEQ…GSSD), and 656-686 (EHEG…PQGD). Over residues 656 to 667 (EHEGEGRADTNR) the composition is skewed to basic and acidic residues. The segment covering 668-682 (HVSTQSNMPTEQSLL) has biased composition (polar residues).

Its pathway is mycotoxin biosynthesis. Functionally, part of the gene cluster that mediates the biosynthesis of gramillins A and B, bicyclic lipopeptides that induce cell death in maize leaves but not in wheat leaves. The nonribosomal peptide synthetase GRA1 incorporates respectively a glutamic adic (Glu), a leucine (Leu), a serine (Ser), a hydroxyglutamine (HOGln), a 2-amino decanoic acid, and 2 cysteins (CysB and CysA). The biosynthesis of 2-amino decanoic acid incorporated in gramillins could be initiated by a fatty acid synthase composed of the alpha and beta subunits FGSG_00036 and FGSG_11656. The cytochrome P450 monooxygenase FGSG_15680 could hydroxylate the fatty acid chain. Subsequent oxidation to the ketone by the oxidoreductase FGSG_00048 and transamination by aminotransferase FGSG_00049 could form 2-amino-decanoic acid. On the other hand, FGSG_15680 could also be responsible for the HO-modified glutamine at the gamma-position. Whether hydroxylation occurs on the fully assembled product or on the Gln residue prior to assembly into the gramillins requires further proof. The thioredoxin FGSG_00043 could also be required for the disulfide-bond formation between CysA and CysB. The specific involvement of the remaining proteins from the cluster is more difficult to discern, but could have broader regulatory (FGSG_00040 and FGSG_11657) or enzymatic functions (FGSG_00044 and FGSG_00045). The final C-domain of GRA1 does not possess the expected sequence of a termination CT domain, often implicated in macrocyclization and release of a cyclopeptidein fungal NRPs; and the thioesterase FGSG_00047 may act in concert with the terminal C-domain of GRA1 to catalyze the formation of the macrocyclic anhydride and release of the products. This is Gramillins biosynthetic cluster protein FGSG_11657 from Gibberella zeae (strain ATCC MYA-4620 / CBS 123657 / FGSC 9075 / NRRL 31084 / PH-1) (Wheat head blight fungus).